The sequence spans 225 residues: Protein ERP3 (225 aa).

Positions 1 to 23 (MSNLCVLFFQFFFLAQFFAEASP) are cleaved as a signal peptide. Residues 24–195 (LTFELNKGRK…STEHRIVMFS (172 aa)) are Lumenal-facing. Residues 33 to 172 (KECLYTLTPE…LHVLERNIQY (140 aa)) form the GOLD domain. Residues 129-138 (ERRKARKAQR) show a composition bias toward basic residues. Positions 129 to 149 (ERRKARKAQRNLRDSKTDPLQ) are disordered. Residues 196–216 (IYGILLIIGMSCAQIAILEFI) form a helical membrane-spanning segment. The Cytoplasmic segment spans residues 217 to 225 (FRESRKHNV).

The protein belongs to the EMP24/GP25L family.

Its subcellular location is the endoplasmic reticulum membrane. Its function is as follows. Involved in vesicular protein trafficking. This chain is Protein ERP3 (ERP3), found in Saccharomyces cerevisiae (strain ATCC 204508 / S288c) (Baker's yeast).